The following is a 157-amino-acid chain: Small ribosomal subunit protein uS7 (157 aa).

It belongs to the universal ribosomal protein uS7 family. As to quaternary structure, part of the 30S ribosomal subunit. Contacts proteins S9 and S11.

One of the primary rRNA binding proteins, it binds directly to 16S rRNA where it nucleates assembly of the head domain of the 30S subunit. Is located at the subunit interface close to the decoding center, probably blocks exit of the E-site tRNA. This chain is Small ribosomal subunit protein uS7, found in Borrelia turicatae (strain 91E135).